A 1005-amino-acid polypeptide reads, in one-letter code: Band 4.1-like protein 2 (1005 aa).

The segment at 1–80 (MTTEVGSVSE…SRGISRFIPP (80 aa)) is disordered. An N-acetylthreonine modification is found at T2. A Phosphoserine modification is found at S7. Residues 22-31 (ATKEKPKEVA) are compositionally biased toward basic and acidic residues. Residues S39, S58, and S87 each carry the phosphoserine modification. T89 bears the Phosphothreonine mark. The tract at residues 93–196 (AKDGGDKKEP…GGAAKRETKE (104 aa)) is disordered. Basic and acidic residues-rich tracts occupy residues 111 to 157 (VLDK…EKPS) and 169 to 196 (VSKE…ETKE). Residues K140 and K144 each participate in a glycyl lysine isopeptide (Lys-Gly) (interchain with G-Cter in SUMO2) cross-link. S170, S208, S386, S402, S499, S550, S562, S575, S598, and S614 each carry phosphoserine. An FERM domain is found at 218-499 (VQCKVTLLDG…EHHTFYRLVS (282 aa)). Positions 502-610 (QPPKAKFLTL…KAPHLQLIEG (109 aa)) are hydrophilic. The segment at 611 to 676 (KKNSLRVEGD…WEKRRITPLS (66 aa)) is spectrin--actin-binding. Y623 carries the phosphotyrosine modification. A phosphoserine mark is found at S627 and S647. Residues 652 to 800 (KRNFMESTPE…EEAVPEASPV (149 aa)) are disordered. Over residues 675–686 (LSLQTQGSSHET) the composition is skewed to polar residues. Residues 690–711 (VEEKKRAEVGKDERVITEEMNG) are compositionally biased toward basic and acidic residues. Residues S715 and S718 each carry the phosphoserine modification. A compositionally biased stretch (low complexity) spans 734–746 (STSLSSESSSSSS). 2 stretches are compositionally biased toward basic and acidic residues: residues 754–770 (GEYR…IREE) and 780–793 (EPRP…REEA). Phosphothreonine is present on T763. Phosphoserine is present on S828. The C-terminal (CTD) stretch occupies residues 855–1005 (HVDIDVLPQI…ETELAEEGED (151 aa)).

Interacts with FCGR1A. Interacts with TRPC4. Interacts (via CTD domain) with FKBP2. Interacts with NUMA1; this interaction is negatively regulated by CDK1 during metaphase and promotes anaphase-specific localization of NUMA1 in symmetrically dividing cells. In terms of tissue distribution, widely expressed.

The protein resides in the cytoplasm. The protein localises to the cytoskeleton. It is found in the cell cortex. It localises to the cell membrane. Its function is as follows. Required for dynein-dynactin complex and NUMA1 recruitment at the mitotic cell cortex during anaphase. In Homo sapiens (Human), this protein is Band 4.1-like protein 2.